A 375-amino-acid chain; its full sequence is Queuine tRNA-ribosyltransferase (375 aa).

The Proton acceptor role is filled by aspartate 89. Substrate is bound by residues aspartate 89–phenylalanine 93, aspartate 143, glutamine 187, and glycine 214. Residues glycine 245–aspartate 251 form an RNA binding region. Aspartate 264 (nucleophile) is an active-site residue. The RNA binding; important for wobble base 34 recognition stretch occupies residues threonine 269–arginine 273. The Zn(2+) site is built by cysteine 302, cysteine 304, cysteine 307, and histidine 333.

The protein belongs to the queuine tRNA-ribosyltransferase family. In terms of assembly, homodimer. Within each dimer, one monomer is responsible for RNA recognition and catalysis, while the other monomer binds to the replacement base PreQ1. Zn(2+) is required as a cofactor.

The enzyme catalyses 7-aminomethyl-7-carbaguanine + guanosine(34) in tRNA = 7-aminomethyl-7-carbaguanosine(34) in tRNA + guanine. The protein operates within tRNA modification; tRNA-queuosine biosynthesis. Catalyzes the base-exchange of a guanine (G) residue with the queuine precursor 7-aminomethyl-7-deazaguanine (PreQ1) at position 34 (anticodon wobble position) in tRNAs with GU(N) anticodons (tRNA-Asp, -Asn, -His and -Tyr). Catalysis occurs through a double-displacement mechanism. The nucleophile active site attacks the C1' of nucleotide 34 to detach the guanine base from the RNA, forming a covalent enzyme-RNA intermediate. The proton acceptor active site deprotonates the incoming PreQ1, allowing a nucleophilic attack on the C1' of the ribose to form the product. After dissociation, two additional enzymatic reactions on the tRNA convert PreQ1 to queuine (Q), resulting in the hypermodified nucleoside queuosine (7-(((4,5-cis-dihydroxy-2-cyclopenten-1-yl)amino)methyl)-7-deazaguanosine). This Salmonella arizonae (strain ATCC BAA-731 / CDC346-86 / RSK2980) protein is Queuine tRNA-ribosyltransferase.